Here is a 251-residue protein sequence, read N- to C-terminus: Protein unc-119 homolog B (251 aa).

Polar residues predominate over residues 1–13 (MSGSNPKAATAGS). A disordered region spans residues 1–56 (MSGSNPKAATAGSQAGPGGLVAGKEEKKKAGGGVLNRLKARRQGPPHTPDDGSGAA). At Ser-2 the chain carries N-acetylserine. N6-acetyllysine is present on Lys-24. A tetradecanoate-binding site is contributed by Tyr-142.

It belongs to the PDE6D/unc-119 family. Found in a complex with ARL3, RP2 and UNC119B; RP2 induces hydrolysis of GTP ARL3 in the complex, leading to the release of UNC119B. Interacts with NPHP3 (when myristoylated). Interacts with CYS1 (when myristoylated). Interacts with MACIR; interaction only takes place when UNC119B is not liganded with myristoylated proteins.

The protein resides in the cell projection. The protein localises to the cilium. Myristoyl-binding protein that acts as a cargo adapter: specifically binds the myristoyl moiety of a subset of N-terminally myristoylated proteins and is required for their localization. Binds myristoylated NPHP3 and plays a key role in localization of NPHP3 to the primary cilium membrane. Does not bind all myristoylated proteins. Probably plays a role in trafficking proteins in photoreceptor cells. In Mus musculus (Mouse), this protein is Protein unc-119 homolog B (Unc119b).